The sequence spans 20 residues: Antimicrobial peptide AJN-10 (20 aa).

The protein localises to the secreted. Displays antimicrobial activity against the Gram-negative bacterium A.hydrophila. This is Antimicrobial peptide AJN-10 from Anguilla japonica (Japanese eel).